Reading from the N-terminus, the 122-residue chain is Large ribosomal subunit protein uL14 (122 aa).

Belongs to the universal ribosomal protein uL14 family. As to quaternary structure, part of the 50S ribosomal subunit. Forms a cluster with proteins L3 and L19. In the 70S ribosome, L14 and L19 interact and together make contacts with the 16S rRNA in bridges B5 and B8.

In terms of biological role, binds to 23S rRNA. Forms part of two intersubunit bridges in the 70S ribosome. The chain is Large ribosomal subunit protein uL14 from Rickettsia africae (strain ESF-5).